The sequence spans 692 residues: Glycine--tRNA ligase beta subunit (692 aa).

It belongs to the class-II aminoacyl-tRNA synthetase family. Tetramer of two alpha and two beta subunits.

Its subcellular location is the cytoplasm. The catalysed reaction is tRNA(Gly) + glycine + ATP = glycyl-tRNA(Gly) + AMP + diphosphate. The protein is Glycine--tRNA ligase beta subunit of Alteromonas mediterranea (strain DSM 17117 / CIP 110805 / LMG 28347 / Deep ecotype).